A 531-amino-acid polypeptide reads, in one-letter code: T-complex protein 1 subunit zeta-2 (531 aa).

It belongs to the TCP-1 chaperonin family. Component of the chaperonin-containing T-complex (TRiC), a heterooligomeric complex of about 850 to 900 kDa that forms two stacked rings, 12 to 16 nm in diameter. In terms of tissue distribution, testis specific.

It localises to the cytoplasm. Component of the chaperonin-containing T-complex (TRiC), a molecular chaperone complex that assists the folding of proteins upon ATP hydrolysis. In Mus musculus (Mouse), this protein is T-complex protein 1 subunit zeta-2 (Cct6b).